Consider the following 1236-residue polypeptide: Complement factor H (1236 aa).

Positions 1-18 are cleaved as a signal peptide; the sequence is MRFPAKIVWLVLWTVCVA. Sushi domains lie at 19-82, 83-143, 144-207, 208-264, 265-322, 325-383, 385-442, 444-505, 507-562, 565-623, 627-685, 688-745, 750-804, 809-866, 868-936, 937-994, 995-1053, 1054-1111, 1114-1172, and 1173-1235; these read EDCK…ICRK, KPCA…ICEV, VKCL…KCVE, IFCK…TCIE, ITCD…RCAW, CSYP…EEPC, RQCI…RCIR, KTCS…VCIK, CDRP…KAAC, RECS…TCKV, KSCA…VCIE, RTCG…QCIA, RKCK…DCNE, QLCP…RCIE, IGCS…QCVG, LPCG…DCIS, TNCV…ACRD, VSCG…QCKD, GKCG…KCLE, and ACVI…YPRC. 40 cysteine pairs are disulfide-bonded: cysteine 21–cysteine 66, cysteine 52–cysteine 80, cysteine 85–cysteine 129, cysteine 114–cysteine 141, cysteine 146–cysteine 192, cysteine 178–cysteine 205, cysteine 210–cysteine 251, cysteine 237–cysteine 262, cysteine 267–cysteine 309, cysteine 294–cysteine 320, cysteine 325–cysteine 372, cysteine 355–cysteine 383, cysteine 387–cysteine 429, cysteine 414–cysteine 440, cysteine 446–cysteine 492, cysteine 475–cysteine 503, cysteine 507–cysteine 551, cysteine 534–cysteine 562, cysteine 567–cysteine 609, cysteine 595–cysteine 621, cysteine 629–cysteine 672, cysteine 658–cysteine 683, cysteine 690–cysteine 732, cysteine 718–cysteine 743, cysteine 752–cysteine 791, cysteine 780–cysteine 802, cysteine 811–cysteine 853, cysteine 839–cysteine 864, cysteine 870–cysteine 923, cysteine 909–cysteine 934, cysteine 939–cysteine 981, cysteine 967–cysteine 992, cysteine 997–cysteine 1040, cysteine 1026–cysteine 1051, cysteine 1056–cysteine 1098, cysteine 1084–cysteine 1109, cysteine 1116–cysteine 1159, cysteine 1145–cysteine 1170, cysteine 1174–cysteine 1225, and cysteine 1208–cysteine 1235. A sulfotyrosine mark is found at tyrosine 168 and tyrosine 170. Residues tyrosine 465 and tyrosine 473 each carry the sulfotyrosine modification. Tyrosine 575, tyrosine 579, and tyrosine 585 each carry sulfotyrosine. Asparagine 775 carries N-linked (GlcNAc...) asparagine glycosylation. An N-linked (GlcNAc...) asparagine glycan is attached at asparagine 1100.

As to quaternary structure, homodimer. Also forms homooligomers. Interacts with complement protein C3b; this interaction inhibits complement activation. Interacts with complement protein C3d. Interacts with CR3/ITGAM; this interaction mediates adhesion of neutrophils to pathogens leading to pathogen clearance. Sulfated on tyrosine residues. In terms of tissue distribution, CFH is one of the most abundant complement components in blood where the liver is the major source of CFH protein in vivo. in addition, CFH is secreted by additional cell types including monocytes, fibroblasts, or endothelial cells.

The protein localises to the secreted. Its function is as follows. Glycoprotein that plays an essential role in maintaining a well-balanced immune response by modulating complement activation. Acts as a soluble inhibitor of complement, where its binding to self markers such as glycan structures prevents complement activation and amplification on cell surfaces. Accelerates the decay of the complement alternative pathway (AP) C3 convertase C3bBb, thus preventing local formation of more C3b, the central player of the complement amplification loop. As a cofactor of the serine protease factor I, CFH also regulates proteolytic degradation of already-deposited C3b. In addition, mediates several cellular responses through interaction with specific receptors. For example, interacts with CR3/ITGAM receptor and thereby mediates the adhesion of human neutrophils to different pathogens. In turn, these pathogens are phagocytosed and destroyed. The protein is Complement factor H (CFH) of Bos taurus (Bovine).